The following is a 519-amino-acid chain: Protein nucleotidyltransferase YdiU (519 aa).

Positions 101, 103, 104, 123, 135, 136, 193, and 200 each coordinate ATP. The active-site Proton acceptor is Asp-271. Positions 272 and 281 each coordinate Mg(2+). Asp-281 serves as a coordination point for ATP.

Belongs to the SELO family. Requires Mg(2+) as cofactor. Mn(2+) is required as a cofactor.

It catalyses the reaction L-seryl-[protein] + ATP = 3-O-(5'-adenylyl)-L-seryl-[protein] + diphosphate. The catalysed reaction is L-threonyl-[protein] + ATP = 3-O-(5'-adenylyl)-L-threonyl-[protein] + diphosphate. It carries out the reaction L-tyrosyl-[protein] + ATP = O-(5'-adenylyl)-L-tyrosyl-[protein] + diphosphate. The enzyme catalyses L-histidyl-[protein] + UTP = N(tele)-(5'-uridylyl)-L-histidyl-[protein] + diphosphate. It catalyses the reaction L-seryl-[protein] + UTP = O-(5'-uridylyl)-L-seryl-[protein] + diphosphate. The catalysed reaction is L-tyrosyl-[protein] + UTP = O-(5'-uridylyl)-L-tyrosyl-[protein] + diphosphate. Nucleotidyltransferase involved in the post-translational modification of proteins. It can catalyze the addition of adenosine monophosphate (AMP) or uridine monophosphate (UMP) to a protein, resulting in modifications known as AMPylation and UMPylation. The polypeptide is Protein nucleotidyltransferase YdiU (Tolumonas auensis (strain DSM 9187 / NBRC 110442 / TA 4)).